The chain runs to 106 residues: MQLKHLKKGDFVKVISGREKGKTGKVLTVISEKNRVVIEKMNMVKRHQKANAMGKGGIVEKEGPIHASNVMMMCGKCNKETRVGIKKLEDGKKVRICKKCNDILDI.

Belongs to the universal ribosomal protein uL24 family. As to quaternary structure, part of the 50S ribosomal subunit.

In terms of biological role, one of two assembly initiator proteins, it binds directly to the 5'-end of the 23S rRNA, where it nucleates assembly of the 50S subunit. Functionally, one of the proteins that surrounds the polypeptide exit tunnel on the outside of the subunit. In Syntrophus aciditrophicus (strain SB), this protein is Large ribosomal subunit protein uL24.